The following is a 785-amino-acid chain: E3 UFM1-protein ligase 1 homolog (785 aa).

Residues 404 to 483 (GGNASNQLDD…GGGGSNKKSV (80 aa)) are disordered.

This sequence belongs to the UFL1 family.

E3 UFM1-protein ligase that mediates ufmylation of target proteins. The polypeptide is E3 UFM1-protein ligase 1 homolog (Drosophila willistoni (Fruit fly)).